We begin with the raw amino-acid sequence, 618 residues long: Grainyhead-like protein 1 homolog (618 aa).

The tract at residues 1 to 91 is transcription activation; the sequence is MTQEYDNKRP…EGEHPEPEHS (91 aa). Over residues 76–92 the composition is skewed to basic and acidic residues; it reads SSAVKPEGEHPEPEHSK. Positions 76 to 100 are disordered; sequence SSAVKPEGEHPEPEHSKRNSIPNVT. Residue T208 is modified to Phosphothreonine. The Grh/CP2 DB domain maps to 248-474; the sequence is SGNNFEYTLE…DLDTQPVLFI (227 aa). 2 interaction with DNA regions span residues 380-389 and 427-430; these read TDFSSQKGVK and RKIR.

It belongs to the grh/CP2 family. Grainyhead subfamily. As to quaternary structure, binds DNA as homodimer. Homodimer, also forms heterodimers with GRHL2 or GRHL3. In terms of processing, methylation at Arg-9 and Lys-116 may be involved in regulating transcriptional activation. In terms of tissue distribution, isoform 1 is highly expressed in brain, pancreas, tonsil, placenta and kidney. Isoform 2 is highly expressed in brain and liver. Expression in the skin is confined to the suprabasal layers of the epidermis and to the hair follicles.

The protein localises to the nucleus. In terms of biological role, transcription factor involved in epithelial development. Binds directly to the consensus DNA sequence 5'-AACCGGTT-3'. Important regulator of DSG1 in the context of hair anchorage and epidermal differentiation, participates in the maintenance of the skin barrier. There is no genetic interaction with GRHL3, nor functional cooperativity due to diverse target gene selectivity during epithelia development. May play a role in regulating glucose homeostasis and insulin signaling. The protein is Grainyhead-like protein 1 homolog of Mus musculus (Mouse).